Here is a 532-residue protein sequence, read N- to C-terminus: Carboxypeptidase Y (532 aa).

Residues 1–20 form the signal peptide; the sequence is MKAFTSLLCGLGLSTTLAKA. A propeptide spans 21-111 (mediates translocation across the endoplasmic reticulum, renders the enzyme inactive during transit, and targets the molecule to the vacuole); the sequence is ISLQRPLGLD…AIENYQLRVN (91 aa). Residues 24 to 27 carry the Vacuolar targeting signal motif; the sequence is QRPL. N-linked (GlcNAc...) (high mannose) asparagine glycosylation is found at Asn-124 and Asn-198. 5 disulfide bridges follow: Cys-167–Cys-409, Cys-304–Cys-318, Cys-328–Cys-351, Cys-335–Cys-344, and Cys-373–Cys-379. The active site involves Ser-257. Asn-279 carries N-linked (GlcNAc...) (high mannose) asparagine glycosylation. The active site involves Asp-449. A substrate-binding site is contributed by Cys-452. Asn-479 is a glycosylation site (N-linked (GlcNAc...) (high mannose) asparagine). His-508 is an active-site residue. Met-509 is a binding site for substrate.

It belongs to the peptidase S10 family. Enters the endoplasmic reticulum as an inactive zymogen and is modified by four N-linked core oligosaccharides, giving rise to a precursor known as P1 (67 kDa). As P1 transits through the Golgi, extension of its core oligosaccharides leads to the Golgi-modified P2 precursor (69 kDa). P2 is sorted away from secretory proteins at or beyond a late Golgi compartment and is subsequently delivered to the vacuole via a prevacuolar endosome-like compartment. Upon arrival in the vacuole, the N-terminal prosegment of P2 is cleaved by vacuolar proteases to yield the enzymatically active mature vacuolar form of CPY (61 kDa). In terms of processing, the four high mannose core N-glycans found in mature CPY are Man(11-15)GlcNAc(2) at Asn-124, Man(8-12)GlcNAc(2) at Asn-198, Man(9-14)GlcNAc(2) at Asn-279 and phosphorylated Man(12-17)GlcNAc(2) as well as Man(11-16)GlcNAc(2) at Asn-479.

The protein localises to the vacuole lumen. It carries out the reaction Release of a C-terminal amino acid with broad specificity.. Its activity is regulated as follows. Inhibited by ZPCK. In terms of biological role, vacuolar serine-type carboxypeptidase involved in degradation of small peptides. Digests preferentially peptides containing an aliphatic or hydrophobic residue in P1' position, as well as methionine, leucine or phenylalanine in P1 position of ester substrate. Also plays a role in breakdown of the autophagic body and the autophagosome-dependent protein synthesis. Plays a key role in phytochelatin (PC) synthesis from glutathione (GSH) by cleaving the Gly from GSH and form the PC-peptides of the structure (gamma-Glu-Cys)2-Gly. Also involved in resistance to xenobiotics via the degradation of glutathione-S-conjugates. In Saccharomyces cerevisiae (strain ATCC 204508 / S288c) (Baker's yeast), this protein is Carboxypeptidase Y.